The sequence spans 316 residues: uncharacterized protein (316 aa).

The 56-residue stretch at 1–56 folds into the HTH lacI-type domain; sequence MATLSDVAKKANVSKMTVSRVINHPETVTDELKKLVHSAMKELNYIPNYAARALVQ. Residues 4–23 constitute a DNA-binding region (H-T-H motif); sequence LSDVAKKANVSKMTVSRVIN.

This is an uncharacterized protein from Bacillus subtilis (strain 168).